The sequence spans 406 residues: Prenyltransferase phqJ (406 aa).

Positions 1 to 19 are enriched in polar residues; the sequence is MTVSTESNFPHGASTQKPQ. Residues 1–23 are disordered; sequence MTVSTESNFPHGASTQKPQSAEP. Glutamate 99 is a binding site for brevianamide F. Arginine 113, lysine 200, and tyrosine 202 together coordinate dimethylallyl diphosphate. Position 204 (tyrosine 204) interacts with brevianamide F. Positions 269, 271, and 340 each coordinate dimethylallyl diphosphate.

Belongs to the tryptophan dimethylallyltransferase family.

Its pathway is alkaloid biosynthesis. Functionally, prenyltransferase; part of the gene cluster that mediates the biosynthesis of paraherquamide, a fungal indole alkaloid that belongs to a family of natural products containing a characteristic bicyclo[2.2.2]diazaoctane core. The first steps in the biosynthesis of paraherquamide is the production of the beta-methyl-proline precursor from L-isoleucine. They require oxidation of a terminally hydroxylated L-isoleucine to the corresponding aldehyde by enzymes which have still to be identified. Spontaneous cyclization and dehydration would yield the 4-methyl pyrolline-5-carboxylic acid, which is then reduced by the pyrroline-5-carboxylate reductase phqD leading to the beta-methyl-proline precursor. The next step of paraherquamide biosynthesis involves coupling of beta-methyl-proline and L-tryptophan by the bimodular NRPS phqB, to produce a monooxopiperazine intermediate. The reductase (R) domain of phqB utilizes NADPH for hydride transfer to reduce the thioester bond of the T domain-tethered linear dipeptide to a hemithioaminal intermediate, which spontaneously cleaves the C-S bond to release the aldehyde product. This compound undergoes spontaneous cyclization and dehydration to give a dienamine which is reverse prenylated at C-2 by the reverse prenyltransferase phqJ. The other prenyltransferase present in the cluster, phqI may be a redundant gene in the pathway. During biosynthetic assembly, the key step to produce the polycyclic core is catalyzed by the bifunctional reductase and intramolecular [4+2] Diels-Alderase, phqE, resulting in formation of the [2.2.2] diazaoctane intermediate preparaherquamide. Following formation of preparaherquamide, an indole 2,3-epoxidation-initiated pinacol-like rearrangement is catalyzed by the phqK FAD-dependent monooxygenase. The prenyltransferase phqA, the cytochrome P450 monooxygenase phqL, and the FAD-linked oxidoreductase phqH (or the cytochrome P450 monooxygenase phqM), are proposed to be involved in the formation of the pyran ring. The FAD-dependent monooxygenase phqK is likely responsible for generation of the spiro-oxindole, and the N-methylation is likely mediated by the phqN methyltransferase leading to the isolable natural product paraherquamide F. However, the order of these biosynthetic steps has still to be determined. In late-stage paraherquamide biosynthesis, the third P450 monooxygenase, phqO, is probably responsible for the C-14 hydroxylation, transforming paraherquamide F to paraherquamide G, and paraherquamide E to the final product paraherquamide A. The expansion from the 6-membered ring pyran (in paraherquamides F and G) to the 7-membered dioxepin ring (in paraherquamides A and E) represents a poorly understood but intriguing process that probably involves the 2-oxoglutarate-dependent dioxygenase phqC. Finally, the remaining members of the paraherquamide cluster, including phqI as well as phqM (or phqH), do not have a clearly prescribed role and appear to be redundant. This is Prenyltransferase phqJ from Penicillium fellutanum.